Consider the following 142-residue polypeptide: Nucleoside diphosphate kinase (142 aa).

ATP contacts are provided by lysine 9, phenylalanine 57, arginine 85, threonine 91, arginine 102, and asparagine 112. The active-site Pros-phosphohistidine intermediate is the histidine 115.

This sequence belongs to the NDK family. As to quaternary structure, homotetramer. It depends on Mg(2+) as a cofactor.

The protein resides in the cytoplasm. It catalyses the reaction a 2'-deoxyribonucleoside 5'-diphosphate + ATP = a 2'-deoxyribonucleoside 5'-triphosphate + ADP. It carries out the reaction a ribonucleoside 5'-diphosphate + ATP = a ribonucleoside 5'-triphosphate + ADP. Major role in the synthesis of nucleoside triphosphates other than ATP. The ATP gamma phosphate is transferred to the NDP beta phosphate via a ping-pong mechanism, using a phosphorylated active-site intermediate. The polypeptide is Nucleoside diphosphate kinase (Dehalococcoides mccartyi (strain ATCC BAA-2100 / JCM 16839 / KCTC 5957 / BAV1)).